Consider the following 525-residue polypeptide: Glutamate--cysteine ligase (525 aa).

The protein belongs to the glutamate--cysteine ligase type 1 family. Type 1 subfamily.

It carries out the reaction L-cysteine + L-glutamate + ATP = gamma-L-glutamyl-L-cysteine + ADP + phosphate + H(+). Its pathway is sulfur metabolism; glutathione biosynthesis; glutathione from L-cysteine and L-glutamate: step 1/2. The sequence is that of Glutamate--cysteine ligase from Pseudoalteromonas translucida (strain TAC 125).